Consider the following 163-residue polypeptide: MTHPLPHDSHTSGAPPLVNKSRDLANGPPFFSPLQSLWEEFLHLLFMGTLLFYRIATKALRGKATLLKSHSKQPAQPGWEPGIRAPSPVPASSLQDHSRLTSLSRTGKEQRRTLSLIRKTSGTPTESTVATAAASTTEVPSRLPWAARAGFKRTTGVCIALPT.

Positions 1 to 10 are enriched in basic and acidic residues; that stretch reads MTHPLPHDSH. Disordered stretches follow at residues 1-21 and 71-112; these read MTHP…VNKS and SKQP…EQRR. A compositionally biased stretch (polar residues) spans 90 to 105; sequence PASSLQDHSRLTSLSR.

This is an uncharacterized protein from Homo sapiens (Human).